Here is a 397-residue protein sequence, read N- to C-terminus: B3 domain-containing protein At4g34400 (397 aa).

Residues 14 to 107 (PRFFTVFVSH…IFEVSIFRGY (94 aa)) constitute a DNA-binding region (TF-B3). The interval 118–255 (ELEEEEEDSV…SSYAPDKEDT (138 aa)) is disordered. Over residues 137–160 (TGAKSEMKNTVPEGRDKGKSKVEV) the composition is skewed to basic and acidic residues. Composition is skewed to acidic residues over residues 161 to 186 (VEDS…TDTD), 212 to 227 (SSDD…DSDY), and 235 to 246 (DIEENSISEEDS).

The protein resides in the nucleus. The chain is B3 domain-containing protein At4g34400 from Arabidopsis thaliana (Mouse-ear cress).